The sequence spans 338 residues: Probable replication factor C subunit 2 (338 aa).

Residue 60 to 67 (GPPGTGKT) coordinates ATP.

Belongs to the activator 1 small subunits family. In terms of assembly, heteropentamer of various rfc subunits that forms a complex (RFC) with PCNA in the presence of ATP.

It is found in the nucleus. The elongation of primed DNA templates by DNA polymerase delta and epsilon requires the action of the accessory proteins PCNA and activator 1. This chain is Probable replication factor C subunit 2 (rfc2), found in Dictyostelium discoideum (Social amoeba).